The sequence spans 576 residues: Potassium-transporting ATPase potassium-binding subunit (576 aa).

12 helical membrane passes run Q4–G24, A65–Q85, A136–I156, V179–I199, L257–F277, G288–L308, F341–V361, L371–G391, G393–G413, M430–L450, L497–I517, and L540–A560.

This sequence belongs to the KdpA family. In terms of assembly, the system is composed of three essential subunits: KdpA, KdpB and KdpC.

It localises to the cell inner membrane. Functionally, part of the high-affinity ATP-driven potassium transport (or Kdp) system, which catalyzes the hydrolysis of ATP coupled with the electrogenic transport of potassium into the cytoplasm. This subunit binds the periplasmic potassium ions and delivers the ions to the membrane domain of KdpB through an intramembrane tunnel. The sequence is that of Potassium-transporting ATPase potassium-binding subunit from Methylibium petroleiphilum (strain ATCC BAA-1232 / LMG 22953 / PM1).